A 275-amino-acid polypeptide reads, in one-letter code: 2,3,4,5-tetrahydropyridine-2,6-dicarboxylate N-succinyltransferase (275 aa).

Substrate is bound by residues Arg-104 and Asp-141.

This sequence belongs to the transferase hexapeptide repeat family. As to quaternary structure, homotrimer.

It is found in the cytoplasm. The enzyme catalyses (S)-2,3,4,5-tetrahydrodipicolinate + succinyl-CoA + H2O = (S)-2-succinylamino-6-oxoheptanedioate + CoA. Its pathway is amino-acid biosynthesis; L-lysine biosynthesis via DAP pathway; LL-2,6-diaminopimelate from (S)-tetrahydrodipicolinate (succinylase route): step 1/3. The protein is 2,3,4,5-tetrahydropyridine-2,6-dicarboxylate N-succinyltransferase of Haemophilus influenzae (strain 86-028NP).